The chain runs to 1476 residues: ABC-type transporter FG02316 (1476 aa).

Asn-2 is a glycosylation site (N-linked (GlcNAc...) asparagine). The next 10 membrane-spanning stretches (helical) occupy residues 23 to 43 (FTLL…LLLA), 64 to 84 (WLYC…AFLV), 97 to 117 (SLPA…LSYV), 156 to 176 (AAIT…AETI), 266 to 286 (ILFI…QPFL), 305 to 325 (QGYG…VTTG), 384 to 404 (VWAN…QLGL), 407 to 427 (LIPV…VSFV), 485 to 505 (LLIW…VLSF), and 532 to 552 (LFAL…SFMG). The region spanning 274–552 (LCFIGFTFCQ…FVTSLSSFMG (279 aa)) is the ABC transmembrane type-1 1 domain. The segment at 586–615 (ISGVSSSEEKHPVSPIQESMMKTEPSGDSP) is disordered. An ABC transporter 1 domain is found at 622 to 847 (IRNASFGYDR…SDNYVSHSDV (226 aa)). Residue Asn-624 is glycosylated (N-linked (GlcNAc...) asparagine). 654–661 (GPVGSGKS) contributes to the ATP binding site. N-linked (GlcNAc...) asparagine glycosylation is found at Asn-682, Asn-696, Asn-798, and Asn-836. Positions 842-870 (VSHSDVSSPDGARSKAPSSGPASSSAPVP) are disordered. The span at 855–870 (SKAPSSGPASSSAPVP) shows a compositional bias: low complexity. 6 consecutive transmembrane segments (helical) span residues 906–926 (MNAI…AYIF), 950–970 (LGYY…FLVL), 1021–1041 (LIDM…VLCI), 1045–1065 (ILIA…LATL), 1137–1157 (WLTL…VVLV), and 1167–1187 (GLIG…KLLM). Residues 916-1195 (VFVLAICAYI…LMTFWTTLET (280 aa)) enclose the ABC transmembrane type-1 2 domain. Positions 1232-1464 (ILFDQVSAGY…GPDASTFASM (233 aa)) constitute an ABC transporter 2 domain. Residue Asn-1250 is glycosylated (N-linked (GlcNAc...) asparagine). 1265–1272 (GRTGSGKS) contacts ATP. The N-linked (GlcNAc...) asparagine glycan is linked to Asn-1414.

The protein belongs to the ABC transporter superfamily. ABCC family. Conjugate transporter (TC 3.A.1.208) subfamily.

The protein resides in the cell membrane. ABC-type transporter; part of the gene cluster that mediates the biosynthesis of the fusahexin, a cyclic hydrophobic hexapeptide with the amino acid sequence cyclo-(D-Ala-L-Leu-D-allo-Thr-L-Pro-D-Leu-L-Leu) that plays an important role in cell surface hydrophobicity. The sequence is that of ABC-type transporter FG02316 from Gibberella zeae (strain ATCC MYA-4620 / CBS 123657 / FGSC 9075 / NRRL 31084 / PH-1) (Wheat head blight fungus).